A 659-amino-acid chain; its full sequence is Cytochrome bo(3) ubiquinol oxidase subunit 1 (659 aa).

The Extracellular portion of the chain corresponds to 1-14; it reads MFGKLSLNSIPYHD. A helical membrane pass occupies residues 15-35; it reads PIIMITCCVVILVFLVISIII. The Cytoplasmic portion of the chain corresponds to 36–56; sequence TIAQKWQYLWNEWCCTVDHKK. A helical membrane pass occupies residues 57 to 77; that stretch reads IAKMYIFLAFIMLFRGFADAI. Residues Arg-71, Asp-75, and His-101 each contribute to the a ubiquinone site. Residues 78–109 are Extracellular-facing; that stretch reads MMRMQQFLVSSYHGNGTGFLPPHHYDQIFTAH. Residue His-109 participates in heme b binding. The helical transmembrane segment at 110-130 threads the bilayer; the sequence is GVIMIFFVAMPLVIGLMNFVV. The Cytoplasmic segment spans residues 131-148; that stretch reads PLQIGSRDVAFPFLNNLS. The chain crosses the membrane as a helical span at residues 149–169; the sequence is LWLTIFSALLMNVSLGIGEFA. Over 170–192 the chain is Extracellular; the sequence is QTGWLAYPPLSELQYSPGVGVDY. Trp-173 serves as a coordination point for heme b. A helical transmembrane segment spans residues 193-213; sequence WIWSLQISGIGTTLTAINFLV. The Cytoplasmic segment spans residues 214–235; it reads TIIKMRSSGMNWFKIPVFTWTS. A helical transmembrane segment spans residues 236–256; it reads FCTNILIIASFPVLTVSLLLL. Over 257 to 280 the chain is Extracellular; sequence TLDRYLGFHFFTNDFGGNMMMYVN. The chain crosses the membrane as a helical span at residues 281–301; sequence LIWIWGHPEVYILILPVFGIF. Residue His-287 participates in Cu(2+) binding. The 1'-histidyl-3'-tyrosine (His-Tyr) cross-link spans 287-291; sequence HPEVY. Tyr-291 contributes to the Fe(II)-heme o binding site. The Cytoplasmic portion of the chain corresponds to 302–318; sequence SEVVATFSSKELFGYTS. A helical transmembrane segment spans residues 319 to 339; it reads LIWATIVITILSFIVWLHHFF. His-336 and His-337 together coordinate Cu(2+). Over 340 to 350 the chain is Extracellular; it reads TMGASANVNAF. A helical transmembrane segment spans residues 351-371; the sequence is FGITTMIISIPTGVKIFNWLF. Residues 372-382 lie on the Cytoplasmic side of the membrane; that stretch reads TMYRGNVRINS. A helical transmembrane segment spans residues 383–403; that stretch reads IMLWTIGFLITFSIGGMAGVL. At 404 to 416 the chain is on the extracellular side; the sequence is LSLPVIDFSLHNS. Fe(II)-heme o contacts are provided by His-414 and His-422. A helical membrane pass occupies residues 417 to 437; that stretch reads LFLVAHFHNVIIGGVVFGCFA. His-424 lines the heme b pocket. The Cytoplasmic portion of the chain corresponds to 438-459; it reads GITYWFPKLFGFMLSEKWGKRA. A helical transmembrane segment spans residues 460–480; sequence FWCWFFGFFCAFMPLYALGLM. Residues 481–499 lie on the Extracellular side of the membrane; sequence GMTRRLSQNINPQFHSMLT. Residues Arg-484 and Arg-485 each contribute to the heme b site. The chain crosses the membrane as a helical span at residues 500–520; the sequence is IAALGTILIFIGIVFQIIQIF. Residues 521 to 587 are Cytoplasmic-facing; sequence VSIRDRNLNR…KLPILYTSFH (67 aa). The helical transmembrane segment at 588 to 608 threads the bilayer; the sequence is MPKNTKFGFLIGFFAFLLGFS. Position 609 (Ala-609) is a topological domain, extracellular. A helical transmembrane segment spans residues 610–630; that stretch reads VWYIFWLFFISFFVIIYLLVI. The Cytoplasmic segment spans residues 631–659; sequence KSLDTNCDYIISIEEIKEIEKCINIKKMD.

This sequence belongs to the heme-copper respiratory oxidase family. The cytochrome bo(3) ubiquinol oxidase complex is a heterooctamer of two A chains, two B chains, two C chains and two D chains. The cofactor is Cu(2+). Heme b is required as a cofactor. It depends on Fe(II)-heme o as a cofactor.

Its subcellular location is the cell membrane. It catalyses the reaction 2 a ubiquinol + O2 + n H(+)(in) = 2 a ubiquinone + 2 H2O + n H(+)(out). Its function is as follows. Cytochrome bo(3) ubiquinol oxidase is the terminal enzyme in the aerobic respiratory chain. Catalyzes the four-electron reduction of O2 to water, using a ubiquinol as a membrane soluble electron donor for molecular oxygen reduction. Has proton pump activity across the membrane in addition to electron transfer, pumping 2 protons/electron and generating a proton motive force. All the redox centers of this enzyme complex are located within the largest subunit, subunit I. Protons are probably pumped via D- and K- channels found in this subunit. In Buchnera aphidicola subsp. Baizongia pistaciae (strain Bp), this protein is Cytochrome bo(3) ubiquinol oxidase subunit 1 (cyoB).